Here is a 167-residue protein sequence, read N- to C-terminus: Small ribosomal subunit protein uS9 (167 aa).

Disordered regions lie at residues 1-45 and 137-167; these read MSEY…GGAT and KAGFLTRDPRATERKKAGLKKARKAPQFSKR. Acidic residues predominate over residues 9–19; that stretch reads DTVEDITESDE. Positions 20–36 are enriched in polar residues; it reads FTGTYTSESSTPATGGN. The segment covering 143-152 has biased composition (basic and acidic residues); sequence RDPRATERKK. Positions 153-167 are enriched in basic residues; the sequence is AGLKKARKAPQFSKR.

Belongs to the universal ribosomal protein uS9 family.

In Kineococcus radiotolerans (strain ATCC BAA-149 / DSM 14245 / SRS30216), this protein is Small ribosomal subunit protein uS9.